Consider the following 750-residue polypeptide: Photosystem I P700 chlorophyll a apoprotein A1 (750 aa).

A run of 8 helical transmembrane segments spans residues 70–93 (VFSA…FHGA), 156–179 (LYCT…FHYH), 195–219 (LNHH…HVSL), 291–309 (IAHH…GHMY), 346–369 (WHAQ…HHMY), 385–411 (LSLF…IFMV), 433–455 (AIIS…LYIH), and 531–549 (FLVH…LILL). The [4Fe-4S] cluster site is built by Cys573 and Cys582. A run of 2 helical transmembrane segments spans residues 589–610 (HVFL…HFSW) and 664–686 (LSAY…MFLF). His675 provides a ligand contact to chlorophyll a'. Positions 683 and 691 each coordinate chlorophyll a. Trp692 is a phylloquinone binding site. Residues 724 to 744 (AVGVTHYLLGGIATTWAFFLA) form a helical membrane-spanning segment.

This sequence belongs to the PsaA/PsaB family. The PsaA/B heterodimer binds the P700 chlorophyll special pair and subsequent electron acceptors. PSI consists of a core antenna complex that captures photons, and an electron transfer chain that converts photonic excitation into a charge separation. The eukaryotic PSI reaction center is composed of at least 11 subunits. P700 is a chlorophyll a/chlorophyll a' dimer, A0 is one or more chlorophyll a, A1 is one or both phylloquinones and FX is a shared 4Fe-4S iron-sulfur center. is required as a cofactor.

It localises to the plastid. The protein localises to the chloroplast thylakoid membrane. The enzyme catalyses reduced [plastocyanin] + hnu + oxidized [2Fe-2S]-[ferredoxin] = oxidized [plastocyanin] + reduced [2Fe-2S]-[ferredoxin]. In terms of biological role, psaA and PsaB bind P700, the primary electron donor of photosystem I (PSI), as well as the electron acceptors A0, A1 and FX. PSI is a plastocyanin-ferredoxin oxidoreductase, converting photonic excitation into a charge separation, which transfers an electron from the donor P700 chlorophyll pair to the spectroscopically characterized acceptors A0, A1, FX, FA and FB in turn. Oxidized P700 is reduced on the lumenal side of the thylakoid membrane by plastocyanin. The sequence is that of Photosystem I P700 chlorophyll a apoprotein A1 from Arabis hirsuta (Hairy rock-cress).